A 350-amino-acid chain; its full sequence is LIM domain-containing protein unc-95 (350 aa).

The segment covering 1-37 (MTISPQPSHQQFESYQWTTESRSSQQRHGTGTPSQDG) has biased composition (polar residues). A disordered region spans residues 1–65 (MTISPQPSHQ…ESRNSNKDKV (65 aa)). Positions 45 to 65 (PVERHVARWRSESRNSNKDKV) are enriched in basic and acidic residues. Residues 83-110 (LTALKNDVEQTTEIIRRKQEQMRMERRQ) are a coiled coil. Disordered regions lie at residues 177–198 (RRGQRGRDGEDGNKKKKEEIEY), 206–225 (PEEQIPQRPKIPEDDNMETD), and 235–262 (MSEETDSLRRRRARSTTPRRTLHISGSP). Positions 268-334 (AVCAYCSEEI…HDCFYKLYNG (67 aa)) constitute an LIM zinc-binding domain.

In terms of processing, ubiquitinated. Ubiquitination by rnf-5 leads to dissociation from muscle dense bodies during molting and is required for ecdysis. As to expression, expressed in the body wall muscles, vulval muscles and the anal muscles. Expressed in the muscle arms of the head muscle cells that form neuromuscular junctions and in the anal depressor muscle.

The protein localises to the cytoplasm. It is found in the nucleus. Its subcellular location is the cell membrane. It localises to the myofibril. The protein resides in the sarcomere. The protein localises to the m line. It is found in the cell junction. Its subcellular location is the focal adhesion. Functionally, required for the assembly and integrity of muscle dense bodies, which establish the adhesion sites of the muscle cells to the extracellular matrix. Decreased localization of unc-95 to dense bodies and their subsequent dissociation plays an important role in ecdysis during molting. Involved in the organization of the muscle sarcomeric structure and thereby required for locomotion. This chain is LIM domain-containing protein unc-95, found in Caenorhabditis elegans.